The following is a 437-amino-acid chain: UDP-N-acetylmuramate--L-alanine ligase (437 aa).

114–120 provides a ligand contact to ATP; that stretch reads GTHGKTS.

This sequence belongs to the MurCDEF family.

It is found in the cytoplasm. It catalyses the reaction UDP-N-acetyl-alpha-D-muramate + L-alanine + ATP = UDP-N-acetyl-alpha-D-muramoyl-L-alanine + ADP + phosphate + H(+). Its pathway is cell wall biogenesis; peptidoglycan biosynthesis. Cell wall formation. This chain is UDP-N-acetylmuramate--L-alanine ligase, found in Lactobacillus gasseri (strain ATCC 33323 / DSM 20243 / BCRC 14619 / CIP 102991 / JCM 1131 / KCTC 3163 / NCIMB 11718 / NCTC 13722 / AM63).